A 317-amino-acid chain; its full sequence is L-lactate dehydrogenase (317 aa).

Residues Val-16, Asp-37, Arg-42, Tyr-67, and 81–82 (GA) contribute to the NAD(+) site. Substrate is bound by residues Gln-84 and Arg-90. NAD(+)-binding positions include Ser-103, 120–122 (AAN), and Ser-145. 122-125 (NPVD) contributes to the substrate binding site. 150–153 (DSAR) is a binding site for substrate. His-177 (proton acceptor) is an active-site residue. Position 221 is a phosphotyrosine (Tyr-221). Residue Thr-230 participates in substrate binding.

This sequence belongs to the LDH/MDH superfamily. LDH family. As to quaternary structure, homotetramer.

It is found in the cytoplasm. The enzyme catalyses (S)-lactate + NAD(+) = pyruvate + NADH + H(+). It participates in fermentation; pyruvate fermentation to lactate; (S)-lactate from pyruvate: step 1/1. In terms of biological role, catalyzes the conversion of lactate to pyruvate. The protein is L-lactate dehydrogenase of Limosilactobacillus fermentum (strain NBRC 3956 / LMG 18251) (Lactobacillus fermentum).